Consider the following 142-residue polypeptide: Large ribosomal subunit protein uL13 (142 aa).

Belongs to the universal ribosomal protein uL13 family. Part of the 50S ribosomal subunit.

Functionally, this protein is one of the early assembly proteins of the 50S ribosomal subunit, although it is not seen to bind rRNA by itself. It is important during the early stages of 50S assembly. The sequence is that of Large ribosomal subunit protein uL13 from Pseudomonas fluorescens (strain Pf0-1).